We begin with the raw amino-acid sequence, 138 residues long: Cysteine desulfuration protein SufE (138 aa).

Cysteine 51 acts as the Cysteine persulfide intermediate in catalysis.

The protein belongs to the SufE family. Homodimer. Interacts with SufS.

The protein resides in the cytoplasm. The protein operates within cofactor biosynthesis; iron-sulfur cluster biosynthesis. Participates in cysteine desulfuration mediated by SufS. Cysteine desulfuration mobilizes sulfur from L-cysteine to yield L-alanine and constitutes an essential step in sulfur metabolism for biosynthesis of a variety of sulfur-containing biomolecules. Functions as a sulfur acceptor for SufS, by mediating the direct transfer of the sulfur atom from the S-sulfanylcysteine of SufS, an intermediate product of cysteine desulfuration process. In Escherichia coli O45:K1 (strain S88 / ExPEC), this protein is Cysteine desulfuration protein SufE.